Here is a 378-residue protein sequence, read N- to C-terminus: Phosphatidyl-myo-inositol mannosyltransferase (378 aa).

GDP-alpha-D-mannose contacts are provided by tyrosine 9 and glycine 16. A 1,2-diacyl-sn-glycero-3-phospho-(1D-myo-inositol) is bound by residues glutamine 18, tyrosine 62–asparagine 63, and arginine 68. Residues arginine 196, arginine 201–lysine 202, valine 251–aspartate 253, lysine 256, glutamate 274–isoleucine 278, and glutamate 282 contribute to the GDP-alpha-D-mannose site.

The protein belongs to the glycosyltransferase group 1 family. As to quaternary structure, monomer. Mg(2+) serves as cofactor.

Its subcellular location is the cell membrane. The enzyme catalyses a 1,2-diacyl-sn-glycero-3-phospho-(1D-myo-inositol) + GDP-alpha-D-mannose = a 1,2-diacyl-sn-glycero-3-phospho-[alpha-D-mannopyranosyl-(1&lt;-&gt;6)-D-myo-inositol] + GDP + H(+). Its pathway is phospholipid metabolism; phosphatidylinositol metabolism. In terms of biological role, involved in the biosynthesis of phosphatidyl-myo-inositol mannosides (PIM) which are early precursors in the biosynthesis of lipomannans (LM) and lipoarabinomannans (LAM). Catalyzes the addition of a mannosyl residue from GDP-D-mannose (GDP-Man) to the position 2 of the carrier lipid phosphatidyl-myo-inositol (PI) to generate a phosphatidyl-myo-inositol bearing an alpha-1,2-linked mannose residue (PIM1). This Mycobacterium bovis (strain ATCC BAA-935 / AF2122/97) protein is Phosphatidyl-myo-inositol mannosyltransferase.